The chain runs to 181 residues: Ribonuclease HII (181 aa).

In terms of domain architecture, RNase H type-2 spans 1-181; sequence MICGIDEVGR…SLHRKSFRLI (181 aa). 3 residues coordinate a divalent metal cation: D6, E7, and D98.

The protein belongs to the RNase HII family. Requires Mn(2+) as cofactor. It depends on Mg(2+) as a cofactor.

Its subcellular location is the cytoplasm. The catalysed reaction is Endonucleolytic cleavage to 5'-phosphomonoester.. Endonuclease that specifically degrades the RNA of RNA-DNA hybrids. The protein is Ribonuclease HII of Borrelia recurrentis (strain A1).